Here is a 297-residue protein sequence, read N- to C-terminus: Small ribosomal subunit protein uS2 (297 aa).

Residues 276-297 are disordered; the sequence is DWASSAPAEGWAGEAPATEAKW.

Belongs to the universal ribosomal protein uS2 family. In terms of assembly, component of the small ribosomal subunit. Mature ribosomes consist of a small (40S) and a large (60S) subunit. The 40S subunit contains about 33 different proteins and 1 molecule of RNA (18S). The 60S subunit contains about 49 different proteins and 3 molecules of RNA (25S, 5.8S and 5S). Interacts with RPS21.

Its subcellular location is the cytoplasm. Its function is as follows. Required for the assembly and/or stability of the 40S ribosomal subunit. Required for the processing of the 20S rRNA-precursor to mature 18S rRNA in a late step of the maturation of 40S ribosomal subunits. The polypeptide is Small ribosomal subunit protein uS2 (Uncinocarpus reesii (strain UAMH 1704)).